The sequence spans 126 residues: Large ribosomal subunit protein bL12 (126 aa).

Belongs to the bacterial ribosomal protein bL12 family. Homodimer. Part of the ribosomal stalk of the 50S ribosomal subunit. Forms a multimeric L10(L12)X complex, where L10 forms an elongated spine to which 2 to 4 L12 dimers bind in a sequential fashion. Binds GTP-bound translation factors.

In terms of biological role, forms part of the ribosomal stalk which helps the ribosome interact with GTP-bound translation factors. Is thus essential for accurate translation. In Coxiella burnetii (strain CbuK_Q154) (Coxiella burnetii (strain Q154)), this protein is Large ribosomal subunit protein bL12.